A 106-amino-acid polypeptide reads, in one-letter code: uncharacterized protein (106 aa).

The N-terminal stretch at 1–22 (MKKHPNLLLGFSVYLSAGTKLT) is a signal peptide. The tract at residues 23–46 (IPPEAEQHTAPSDNNKRKRAKCDD) is disordered.

This is an uncharacterized protein from Arabidopsis thaliana (Mouse-ear cress).